Reading from the N-terminus, the 143-residue chain is Large ribosomal subunit protein uL11 (143 aa).

This sequence belongs to the universal ribosomal protein uL11 family. As to quaternary structure, part of the ribosomal stalk of the 50S ribosomal subunit. Interacts with L10 and the large rRNA to form the base of the stalk. L10 forms an elongated spine to which L12 dimers bind in a sequential fashion forming a multimeric L10(L12)X complex. In terms of processing, one or more lysine residues are methylated.

In terms of biological role, forms part of the ribosomal stalk which helps the ribosome interact with GTP-bound translation factors. This is Large ribosomal subunit protein uL11 from Ralstonia nicotianae (strain ATCC BAA-1114 / GMI1000) (Ralstonia solanacearum).